The sequence spans 575 residues: Dihydroxy-acid dehydratase (575 aa).

Position 64 (Cys-64) interacts with [2Fe-2S] cluster. Position 96 (Asp-96) interacts with Mg(2+). Residue Cys-137 participates in [2Fe-2S] cluster binding. 2 residues coordinate Mg(2+): Asp-138 and Lys-139. Position 139 is an N6-carboxylysine (Lys-139). Cys-214 is a [2Fe-2S] cluster binding site. Glu-465 contacts Mg(2+). Ser-491 (proton acceptor) is an active-site residue.

It belongs to the IlvD/Edd family. As to quaternary structure, homodimer. The cofactor is [2Fe-2S] cluster. Requires Mg(2+) as cofactor.

It catalyses the reaction (2R)-2,3-dihydroxy-3-methylbutanoate = 3-methyl-2-oxobutanoate + H2O. The catalysed reaction is (2R,3R)-2,3-dihydroxy-3-methylpentanoate = (S)-3-methyl-2-oxopentanoate + H2O. Its pathway is amino-acid biosynthesis; L-isoleucine biosynthesis; L-isoleucine from 2-oxobutanoate: step 3/4. It participates in amino-acid biosynthesis; L-valine biosynthesis; L-valine from pyruvate: step 3/4. Its function is as follows. Functions in the biosynthesis of branched-chain amino acids. Catalyzes the dehydration of (2R,3R)-2,3-dihydroxy-3-methylpentanoate (2,3-dihydroxy-3-methylvalerate) into 2-oxo-3-methylpentanoate (2-oxo-3-methylvalerate) and of (2R)-2,3-dihydroxy-3-methylbutanoate (2,3-dihydroxyisovalerate) into 2-oxo-3-methylbutanoate (2-oxoisovalerate), the penultimate precursor to L-isoleucine and L-valine, respectively. The sequence is that of Dihydroxy-acid dehydratase from Mycobacterium bovis (strain ATCC BAA-935 / AF2122/97).